We begin with the raw amino-acid sequence, 342 residues long: MTLILKRVQLLKDKPRREAIDRFLRQHQLSLEADCEMAIIAEYQQRLVGCGAIAGNVLKCIAIDPSLQGEGLSLKLLTELLTLAYELGRSELFLFTKPCNAALFSGAGFWPIAQAGDRAVLMENSRERLTRYCRQLAMYRQPGRKIGAIVMNANPFTLGHRWLVEQAASQCDWLHLFVVKEDASCFSYHDRFKLIEQGITGIDKVTLHPGSAYLISRATFPGYFLKEQGVVDDCHSQIDLQLFRERLAPALQITHRFVGTEPLCPLTRNYNQRMKSLLEAPGDAPPIEVVELARIEKNGGPVSASRVRELYRQRNWQAVAALVPPGTLSFLMQLAESEHQTA.

One can recognise an N-acetyltransferase domain in the interval 1–127 (MTLILKRVQL…RAVLMENSRE (127 aa)).

It carries out the reaction holo-[citrate lyase ACP] + acetate + ATP = acetyl-[citrate lyase ACP] + AMP + diphosphate. In terms of biological role, acetylation of prosthetic group (2-(5''-phosphoribosyl)-3'-dephosphocoenzyme-A) of the gamma subunit of citrate lyase. This chain is [Citrate [pro-3S]-lyase] ligase (citC), found in Klebsiella pneumoniae.